The sequence spans 525 residues: Peptide chain release factor 3 (525 aa).

The 268-residue stretch at 9 to 276 (AKRRTFAIIS…GFTTYAPEPQ (268 aa)) folds into the tr-type G domain. GTP is bound by residues 18 to 25 (SHPDAGKT), 86 to 90 (DTPGH), and 140 to 143 (NKFD).

This sequence belongs to the TRAFAC class translation factor GTPase superfamily. Classic translation factor GTPase family. PrfC subfamily.

It localises to the cytoplasm. Increases the formation of ribosomal termination complexes and stimulates activities of RF-1 and RF-2. It binds guanine nucleotides and has strong preference for UGA stop codons. It may interact directly with the ribosome. The stimulation of RF-1 and RF-2 is significantly reduced by GTP and GDP, but not by GMP. The sequence is that of Peptide chain release factor 3 from Francisella philomiragia subsp. philomiragia (strain ATCC 25017 / CCUG 19701 / FSC 153 / O#319-036).